A 213-amino-acid chain; its full sequence is Transcriptional regulatory protein YdfI (213 aa).

The Response regulatory domain occupies 3 to 118 (KVLIVDDHLV…TLFHTMDAAI (116 aa)). Aspartate 54 bears the 4-aspartylphosphate mark. The region spanning 142–207 (KQRNETQLTE…EAVTIAMQKG (66 aa)) is the HTH luxR-type domain. A DNA-binding region (H-T-H motif) is located at residues 166 to 185 (SKAIAFDLGVSERTVKSRLT).

Phosphorylated by YdfH.

Its subcellular location is the cytoplasm. Member of the two-component regulatory system YdfH/YdfI. Regulates the transcription of ydfJ by binding to its promoter region. The sequence is that of Transcriptional regulatory protein YdfI (ydfI) from Bacillus subtilis (strain 168).